A 160-amino-acid polypeptide reads, in one-letter code: Endoribonuclease YbeY (160 aa).

Residues His121, His125, and His131 each contribute to the Zn(2+) site.

It belongs to the endoribonuclease YbeY family. It depends on Zn(2+) as a cofactor.

It is found in the cytoplasm. In terms of biological role, single strand-specific metallo-endoribonuclease involved in late-stage 70S ribosome quality control and in maturation of the 3' terminus of the 16S rRNA. This is Endoribonuclease YbeY from Syntrophus aciditrophicus (strain SB).